We begin with the raw amino-acid sequence, 343 residues long: Twinfilin (343 aa).

2 ADF-H domains span residues 4-139 (QTGI…KHKI) and 177-312 (GINC…EELH). Positions 317-343 (NLRPQFSKPKGPPSRGAKRLTKPQAVE) are disordered.

It belongs to the actin-binding proteins ADF family. Twinfilin subfamily. In terms of assembly, interacts with G-actin; ADP-actin form.

It is found in the cytoplasm. Its subcellular location is the cytoskeleton. The protein localises to the cell cortex. Actin-binding protein involved in motile and morphological processes. Inhibits actin polymerization, likely by sequestering G-actin. The protein is Twinfilin (twf) of Aedes aegypti (Yellowfever mosquito).